The primary structure comprises 309 residues: Olfactory receptor 7A10 (309 aa).

Residues 1 to 25 (MKSWNNTIILEFLLLGISEEPELQA) are Extracellular-facing. Asn5 is a glycosylation site (N-linked (GlcNAc...) asparagine). The helical transmembrane segment at 26–46 (FLFGLFLSMYLVTVLGNLLII) threads the bilayer. Topologically, residues 47–54 (LATISDSH) are cytoplasmic. The chain crosses the membrane as a helical span at residues 55–75 (LHTPMYFFLSNLSFVDICFVS). At 76-99 (TTVPKMLVNIQTHNKVITYAGCIT) the chain is on the extracellular side. Cysteines 97 and 189 form a disulfide. The chain crosses the membrane as a helical span at residues 100 to 120 (QMCFFLLFVGLDNFLLTVMAY). The Cytoplasmic segment spans residues 121–139 (DRFVAICHPLHYMVIMNPQ). A helical membrane pass occupies residues 140–160 (LCGLLVLASWIMSVLNSMLQS). The Extracellular segment spans residues 161 to 197 (LMVLPLPFCTHMEIPHFFCEINQVVHLACSDTFLNDI). Residues 198–217 (VMYFAVALLGGGPLTGILYS) form a helical membrane-spanning segment. Topologically, residues 218–237 (YSKIVSSIRAISSAQGKYKA) are cytoplasmic. Residues 238–258 (FSTCASHLSVVSLFYGTCLGV) form a helical membrane-spanning segment. Topologically, residues 259–271 (YLSSAATHNSHTG) are extracellular. The helical transmembrane segment at 272–292 (AAASVMYTVVTPMLNPFIYSL) threads the bilayer. The Cytoplasmic segment spans residues 293–309 (RNKHIKGAMKTFFRGKQ).

It belongs to the G-protein coupled receptor 1 family.

It localises to the cell membrane. Its function is as follows. Odorant receptor. This Homo sapiens (Human) protein is Olfactory receptor 7A10 (OR7A10).